Here is a 285-residue protein sequence, read N- to C-terminus: Putative hydrolase DDAH2 (285 aa).

Residue His171 is the Proton donor of the active site. Cys276 functions as the Nucleophile in the catalytic mechanism.

Belongs to the DDAH family. In terms of processing, phosphorylated by TBK1. Phosphorylation inhibits the translocation into the mitochondrion upon Sendai viral infection.

It localises to the cytoplasm. It is found in the mitochondrion. Its function is as follows. Putative hydrolase with unknown substrate. Does not hydrolyze N(G),N(G)-dimethyl-L-arginine (ADMA) which acts as an inhibitor of NOS. In endothelial cells, induces expression of vascular endothelial growth factor (VEGF) via phosphorylation of the transcription factor SP1 by PKA in a process that is independent of NO and NO synthase. Similarly, enhances pancreatic insulin secretion through SP1-mediated transcriptional up-regulation of secretagogin/SCGN, an insulin vesicle docking protein. Upon viral infection, relocates to mitochondria where it promotes mitochondrial fission through activation of DNM1L leading to the inhibition of innate response activation mediated by MAVS. The protein is Putative hydrolase DDAH2 (DDAH2) of Bos taurus (Bovine).